The primary structure comprises 110 residues: UPF0060 membrane protein AHA_2410 (110 aa).

4 helical membrane passes run 8-28, 33-53, 63-83, and 87-107; these read GLFL…YLWL, SVWL…LLSL, AAYG…VDGI, and LWDL…MFAP.

This sequence belongs to the UPF0060 family.

Its subcellular location is the cell inner membrane. The protein is UPF0060 membrane protein AHA_2410 of Aeromonas hydrophila subsp. hydrophila (strain ATCC 7966 / DSM 30187 / BCRC 13018 / CCUG 14551 / JCM 1027 / KCTC 2358 / NCIMB 9240 / NCTC 8049).